The following is a 282-amino-acid chain: PILR alpha-associated neural protein (282 aa).

The signal sequence occupies residues 1–31; the sequence is MESRMWPALLLSHLLPLWPLLLLPLPPPAQG. The disordered stretch occupies residues 28 to 99; the sequence is PAQGSSSSPR…PSGFEEGPPS (72 aa). Over 32–178 the chain is Extracellular; that stretch reads SSSSPRTPPA…FGGRGEGVDP (147 aa). Low complexity predominate over residues 46-56; the sequence is PCARGGPSAPR. Residue threonine 140 is glycosylated (O-linked (GalNAc...) threonine). A helical transmembrane segment spans residues 179–199; sequence QLYVTITISIIIVLVATGIIF. Residues 200–282 are Cytoplasmic-facing; it reads KFCWDRSQKR…QLNRIPLVNL (83 aa). The tract at residues 209–282 is disordered; it reads RRRPSGQQGA…QLNRIPLVNL (74 aa). The span at 213 to 229 shows a compositional bias: polar residues; the sequence is SGQQGALRQEESQQPLT.

In terms of processing, O-glycosylation at Thr-140 is essential for recognition by PILRA. Mainly expressed in adult brain and cerebellum. Weaker expression in fetal brain and virtually no expression in spleen, heart, kidney, liver and dorsal ganglion relative to brain.

It localises to the membrane. Acts as a ligand for PILRA in neural tissues, where it may be involved in immune regulation. The protein is PILR alpha-associated neural protein (PIANP) of Homo sapiens (Human).